Consider the following 270-residue polypeptide: Regulatory protein RecX (270 aa).

Belongs to the RecX family.

The protein localises to the cytoplasm. Modulates RecA activity. This is Regulatory protein RecX from Bacillus cereus (strain G9842).